The sequence spans 545 residues: Ribulokinase (545 aa).

This sequence belongs to the ribulokinase family.

The catalysed reaction is D-ribulose + ATP = D-ribulose 5-phosphate + ADP + H(+). The enzyme catalyses L-ribulose + ATP = L-ribulose 5-phosphate + ADP + H(+). The protein operates within carbohydrate degradation; L-arabinose degradation via L-ribulose; D-xylulose 5-phosphate from L-arabinose (bacterial route): step 2/3. The polypeptide is Ribulokinase (Staphylococcus aureus (strain MRSA252)).